Reading from the N-terminus, the 2581-residue chain is Chromodomain-helicase-DNA-binding protein 8 (2581 aa).

3 disordered regions span residues 22–114 (DDSF…QTST), 253–281 (VKGSAPAGNPGATGPPLKPAVTLTSTPAQ), and 349–375 (QKIQIVPQPPSSQPQPQPPPSAQPLTL). Composition is skewed to polar residues over residues 42–64 (SLDSLDQMNQDGGSGDVGNSSAS) and 94–114 (DYTTQPTSQEQPAQPVLQTST). Over residues 255–267 (GSAPAGNPGATGP) the composition is skewed to low complexity. Residues 355–370 (PQPPSSQPQPQPPPSA) are compositionally biased toward pro residues. At Ser-432 the chain carries Phosphoserine. Disordered stretches follow at residues 473 to 584 (RARG…KRKK) and 596 to 616 (DEEEEEVDVTGPIKPEPILPE). A compositionally biased stretch (basic and acidic residues) spans 493 to 516 (RPEEEGEKKRRKKSSGERLKEEKP). Ser-553 and Ser-562 each carry phosphoserine. The span at 572–584 (QKRRSNRQVKRKK) shows a compositional bias: basic residues. A Glycyl lysine isopeptide (Lys-Gly) (interchain with G-Cter in SUMO) cross-link involves residue Lys-609. 2 Chromo domains span residues 642–709 (AIVD…AQMR) and 724–790 (VEVD…RVNR). Residues 823 to 997 (LFNWYNRQNC…FSLLHFLEPS (175 aa)) form the Helicase ATP-binding domain. 836–843 (DEMGLGKT) contacts ATP. The DEAH box motif lies at 948 to 951 (DEAH). Residues 1137–1288 (LIDKLLPKLK…KAVLQSMSGR (152 aa)) enclose the Helicase C-terminal domain. A phosphoserine mark is found at Ser-1420 and Ser-1424. Residues 1692 to 1713 (EDPEYKPLQGPPKDPDDEGDPL) form a disordered region. Residues 1789-2302 (IARREKQQRW…LVELEVECME (514 aa)) form an interaction with FAM124B region. Phosphoserine occurs at positions 1976 and 1978. Residues 1988–2016 (QCTSRTASPSPLRPDVPAEKSPEENAVQV) form a disordered region. Phosphothreonine is present on Thr-1993. Ser-1995, Ser-1997, and Ser-2008 each carry phosphoserine. A Glycyl lysine isopeptide (Lys-Gly) (interchain with G-Cter in SUMO2) cross-link involves residue Lys-2025. Disordered regions lie at residues 2047 to 2118 (SSDT…YDEE) and 2179 to 2221 (NRRS…SSSA). Positions 2063-2072 (EDDDDSDSEL) are enriched in acidic residues. Phosphoserine is present on residues Ser-2068 and Ser-2070. Low complexity predominate over residues 2075-2094 (SKLSPSSSSSSSSSSSSSSS). A compositionally biased stretch (basic and acidic residues) spans 2102-2116 (EEKLTADRSRPKLYD). Ser-2182, Ser-2200, and Ser-2202 each carry phosphoserine. Thr-2204 is modified (phosphothreonine). Ser-2211 bears the Phosphoserine mark. At Thr-2215 the chain carries Phosphothreonine. Ser-2223 is subject to Phosphoserine. A Glycyl lysine isopeptide (Lys-Gly) (interchain with G-Cter in SUMO2) cross-link involves residue Lys-2256. The interval 2484–2581 (PHVDSSTMLH…NSDSSDDADD (98 aa)) is disordered. The segment covering 2492–2510 (LHHHHHHPHPHHHHHHHPG) has biased composition (basic residues). A compositionally biased stretch (low complexity) spans 2513–2528 (TTGYPSSPATTTSGTA). Ser-2519 carries the post-translational modification Phosphoserine. The segment covering 2537 to 2550 (EDDDEEEDEDDDDL) has biased composition (acidic residues). Residues 2565 to 2574 (DDPMMPANSD) are compositionally biased toward low complexity.

It belongs to the SNF2/RAD54 helicase family. CHD8 subfamily. As to quaternary structure, interacts with p53/TP53, histone H1 and CTCF. Component of some MLL1/MLL complex, at least composed of the core components KMT2A/MLL1, ASH2L, HCFC1/HCF1, WDR5 and RBBP5, as well as the facultative components BACC1, CHD8, E2F6, HSP70, INO80C, KANSL1, LAS1L, MAX, MCRS1, MGA, KAT8/MOF, PELP1, PHF20, PRP31, RING2, RUVB1/TIP49A, RUVB2/TIP49B, SENP3, TAF1, TAF4, TAF6, TAF7, TAF9 and TEX10. Interacts with CHD7. Interacts with FAM124B. Interacts with CTNNB1. Interacts with PIAS3. Interacts with TLK2. Interacts with HNRNPL in an RNA-dependent manner. Post-translationally, sumoylated.

It is found in the nucleus. The catalysed reaction is ATP + H2O = ADP + phosphate + H(+). Functionally, ATP-dependent chromatin-remodeling factor, it slides nucleosomes along DNA; nucleosome sliding requires ATP. Acts as a transcription repressor by remodeling chromatin structure and recruiting histone H1 to target genes. Suppresses p53/TP53-mediated apoptosis by recruiting histone H1 and preventing p53/TP53 transactivation activity. Acts as a negative regulator of Wnt signaling pathway by regulating beta-catenin (CTNNB1) activity. Negatively regulates CTNNB1-targeted gene expression by being recruited specifically to the promoter regions of several CTNNB1 responsive genes. Involved in both enhancer blocking and epigenetic remodeling at chromatin boundary via its interaction with CTCF. Acts as a suppressor of STAT3 activity by suppressing the LIF-induced STAT3 transcriptional activity. Also acts as a transcription activator via its interaction with ZNF143 by participating in efficient U6 RNA polymerase III transcription. Regulates alternative splicing of a core group of genes involved in neuronal differentiation, cell cycle and DNA repair. Enables H3K36me3-coupled transcription elongation and co-transcriptional RNA processing likely via interaction with HNRNPL. This is Chromodomain-helicase-DNA-binding protein 8 from Rattus norvegicus (Rat).